A 104-amino-acid polypeptide reads, in one-letter code: UPF0213 protein in VLF1-GP41 intergenic region (104 aa).

The GIY-YIG domain occupies 9 to 89; that stretch reads KVWCVYILRQ…SKYFKLRLIK (81 aa).

This sequence belongs to the UPF0213 family.

This chain is UPF0213 protein in VLF1-GP41 intergenic region, found in Autographa californica nuclear polyhedrosis virus (AcMNPV).